The following is a 366-amino-acid chain: 1-deoxy-D-xylulose 5-phosphate reductoisomerase (366 aa).

T7, G8, S9, I10, G31, N33, and N111 together coordinate NADPH. Residue K112 coordinates 1-deoxy-D-xylulose 5-phosphate. Position 113 (E113) interacts with NADPH. Residue D131 participates in Mn(2+) binding. Positions 132, 133, 162, and 185 each coordinate 1-deoxy-D-xylulose 5-phosphate. A Mn(2+)-binding site is contributed by E133. G191 contacts NADPH. The 1-deoxy-D-xylulose 5-phosphate site is built by S198, N203, K204, and E207. E207 is a binding site for Mn(2+).

This sequence belongs to the DXR family. The cofactor is Mg(2+). Requires Mn(2+) as cofactor.

It carries out the reaction 2-C-methyl-D-erythritol 4-phosphate + NADP(+) = 1-deoxy-D-xylulose 5-phosphate + NADPH + H(+). The protein operates within isoprenoid biosynthesis; isopentenyl diphosphate biosynthesis via DXP pathway; isopentenyl diphosphate from 1-deoxy-D-xylulose 5-phosphate: step 1/6. Catalyzes the NADPH-dependent rearrangement and reduction of 1-deoxy-D-xylulose-5-phosphate (DXP) to 2-C-methyl-D-erythritol 4-phosphate (MEP). This Nautilia profundicola (strain ATCC BAA-1463 / DSM 18972 / AmH) protein is 1-deoxy-D-xylulose 5-phosphate reductoisomerase.